The following is a 557-amino-acid chain: MSVQSSGVLLAPSKNLSPEVGRRCANFHPSIWGDHFLSYASEFTNTDDHLKQHVQQLKEEVRKMLMAADDDSAQKLLLIDAIQRLGVAYHFESEIDEVLKHMFDGSVVSAEEDVYTASLRFRLLRQQGYHVSCDLFNNFKDNEGNFKESLSSDVRGMLSLYEATHFRVHGEDILDEALAFTTTHLQSATKHSSNPLAEQVVHALKQPIRKGLPRLEARHYFSVYQADDSHNKALLKLAKLDFNLLQKLHQKELSDISAWWKDLDFAHKLPFARDRVVECYFWILGVYFEPQFFFARRILTKVIAMTSIIDDIYDVYGTLEELELFTEAVERWDISAIDQLPEYMRVCYQALLYVYSEIEEEMAKEGRSYRLYYAKEAMKNQVRAYYEEAKWLQVQQIPTMEEYMPVALVTSAYSMLATTSFVGMGDAVTKESFDWIFSKPKIVRASAIVCRLMDDMVFHKFEQKRGHVASAVECYMKQHGASEQETPNEFPQPVREAWKDINEECLIPTAVPMPILMRVLNLARVIDVIYKNEDGYTHFGAVLKDFVTSMLIDPVPI.

Mg(2+) is bound by residues aspartate 310, aspartate 314, and glutamate 462. Residues 310–314 (DDIYD) carry the DDXXD motif motif.

The protein belongs to the terpene synthase family. Tpsa subfamily. Requires Mg(2+) as cofactor. Expressed in flowers. Detected in stems, young leaves and tendrils.

Its subcellular location is the cytoplasm. The catalysed reaction is (2E,6E)-farnesyl diphosphate + H2O = (1E,4S,5E,7R)-germacra-1(10),5-dien-11-ol + diphosphate. It carries out the reaction (2E,6E)-farnesyl diphosphate = (-)-germacrene D + diphosphate. The protein operates within secondary metabolite biosynthesis; terpenoid biosynthesis. In terms of biological role, involved in the biosynthesis of germacrene D. Can use farnesyl diphosphate as substrate, but not geranyl diphosphate or geranylgeranyl diphosphate. Produces mainly (-)-germacrene D along with gamma-cadinene. This Vitis vinifera (Grape) protein is (-)-germacrene D synthase.